The following is a 397-amino-acid chain: uncharacterized protein (397 aa).

Transmembrane regions (helical) follow at residues Met-1–Val-21, Val-39–Phe-59, Glu-76–Pro-96, Val-103–Ala-123, Ala-124–Ala-144, Met-194–Phe-214, Ala-219–Leu-239, Leu-255–Leu-275, and Gln-301–Ala-321.

It belongs to the TerC family.

It localises to the cell membrane. This is an uncharacterized protein from Mycobacterium bovis (strain ATCC BAA-935 / AF2122/97).